A 194-amino-acid polypeptide reads, in one-letter code: Oligoribonuclease (194 aa).

One can recognise an Exonuclease domain in the interval 11–174 (LIWIDLEMTG…SDVRDSINEL (164 aa)). Tyr132 is a catalytic residue.

It belongs to the oligoribonuclease family.

It localises to the cytoplasm. 3'-to-5' exoribonuclease specific for small oligoribonucleotides. The chain is Oligoribonuclease from Xanthomonas oryzae pv. oryzae (strain MAFF 311018).